Consider the following 154-residue polypeptide: Ribosome maturation factor RimP (154 aa).

It belongs to the RimP family.

It localises to the cytoplasm. In terms of biological role, required for maturation of 30S ribosomal subunits. This is Ribosome maturation factor RimP from Yersinia pseudotuberculosis serotype O:1b (strain IP 31758).